Here is a 511-residue protein sequence, read N- to C-terminus: Histidine ammonia-lyase (511 aa).

The 5-imidazolinone (Ala-Gly) cross-link spans 142–144; it reads ASG. Ser143 is modified (2,3-didehydroalanine (Ser)).

This sequence belongs to the PAL/histidase family. Post-translationally, contains an active site 4-methylidene-imidazol-5-one (MIO), which is formed autocatalytically by cyclization and dehydration of residues Ala-Ser-Gly.

Its subcellular location is the cytoplasm. The enzyme catalyses L-histidine = trans-urocanate + NH4(+). It functions in the pathway amino-acid degradation; L-histidine degradation into L-glutamate; N-formimidoyl-L-glutamate from L-histidine: step 1/3. The polypeptide is Histidine ammonia-lyase (Rhizobium rhizogenes (strain K84 / ATCC BAA-868) (Agrobacterium radiobacter)).